A 98-amino-acid chain; its full sequence is NADH-ubiquinone oxidoreductase chain 4L (98 aa).

Transmembrane regions (helical) follow at residues Met-1–Val-21, Ser-29–Leu-49, and Ile-61–Val-81.

Belongs to the complex I subunit 4L family. As to quaternary structure, core subunit of respiratory chain NADH dehydrogenase (Complex I) which is composed of 45 different subunits.

It is found in the mitochondrion inner membrane. It catalyses the reaction a ubiquinone + NADH + 5 H(+)(in) = a ubiquinol + NAD(+) + 4 H(+)(out). Functionally, core subunit of the mitochondrial membrane respiratory chain NADH dehydrogenase (Complex I) which catalyzes electron transfer from NADH through the respiratory chain, using ubiquinone as an electron acceptor. Part of the enzyme membrane arm which is embedded in the lipid bilayer and involved in proton translocation. This chain is NADH-ubiquinone oxidoreductase chain 4L (MT-ND4L), found in Lynx canadensis (Canada lynx).